We begin with the raw amino-acid sequence, 150 residues long: Large ribosomal subunit protein uL13 (150 aa).

Belongs to the universal ribosomal protein uL13 family. As to quaternary structure, part of the 50S ribosomal subunit.

Its function is as follows. This protein is one of the early assembly proteins of the 50S ribosomal subunit, although it is not seen to bind rRNA by itself. It is important during the early stages of 50S assembly. This chain is Large ribosomal subunit protein uL13, found in Chlamydia caviae (strain ATCC VR-813 / DSM 19441 / 03DC25 / GPIC) (Chlamydophila caviae).